The chain runs to 305 residues: Elongation factor Ts (305 aa).

Positions 79–82 (TDFV) are involved in Mg(2+) ion dislocation from EF-Tu.

This sequence belongs to the EF-Ts family.

The protein localises to the cytoplasm. Its function is as follows. Associates with the EF-Tu.GDP complex and induces the exchange of GDP to GTP. It remains bound to the aminoacyl-tRNA.EF-Tu.GTP complex up to the GTP hydrolysis stage on the ribosome. This is Elongation factor Ts from Brucella anthropi (strain ATCC 49188 / DSM 6882 / CCUG 24695 / JCM 21032 / LMG 3331 / NBRC 15819 / NCTC 12168 / Alc 37) (Ochrobactrum anthropi).